Here is a 633-residue protein sequence, read N- to C-terminus: E3 ubiquitin-protein ligase ZSWIM2 (633 aa).

The SWIM-type zinc finger occupies 54-87 (FRVFLGNPHVCNCSTFPKGGELCKHICWVLLKKF). An RING-type 1 zinc finger spans residues 147 to 198 (CSICQELLLEKKLPVTFCRFGCGNSIHIKCMKILANYQSTSNTSMLKCPLCR). The ZZ-type zinc-finger motif lies at 229–280 (HLGIPCNNCKQFPIEGKCYKCTECIEYHLCQECFDSCCHLSHTFTFREKRNQ). Zn(2+)-binding residues include Cys-234, Cys-237, Cys-249, Cys-252, Cys-258, Cys-261, His-267, and His-270. The RING-type 2 zinc finger occupies 344-388 (CLLCLKAFHLGQHTRLLPCTHKFHRKCIDNWLFHKCNSCPIDGQV).

Dimer. Interacts with UBE2D1. Polyubiquitinated. Polyubiquitination is followed by degradation via the proteasome. Expression is testis-specific.

The catalysed reaction is S-ubiquitinyl-[E2 ubiquitin-conjugating enzyme]-L-cysteine + [acceptor protein]-L-lysine = [E2 ubiquitin-conjugating enzyme]-L-cysteine + N(6)-ubiquitinyl-[acceptor protein]-L-lysine.. In terms of biological role, E3 ubiquitin-protein ligase involved in the regulation of Fas-, DR3- and DR4-mediated apoptosis. Functions in conjunction with the UBE2D1, UBE2D3 and UBE2E1 E2 ubiquitin-conjugating enzymes. The sequence is that of E3 ubiquitin-protein ligase ZSWIM2 from Homo sapiens (Human).